An 84-amino-acid polypeptide reads, in one-letter code: Cell division topological specificity factor (84 aa).

This sequence belongs to the MinE family.

Its function is as follows. Prevents the cell division inhibition by proteins MinC and MinD at internal division sites while permitting inhibition at polar sites. This ensures cell division at the proper site by restricting the formation of a division septum at the midpoint of the long axis of the cell. This chain is Cell division topological specificity factor, found in Azotobacter vinelandii (strain DJ / ATCC BAA-1303).